The primary structure comprises 118 residues: Basic phospholipase A2 PA-9C (118 aa).

Intrachain disulfides connect Cys-11-Cys-71, Cys-27-Cys-117, Cys-29-Cys-45, Cys-44-Cys-98, Cys-51-Cys-91, Cys-60-Cys-84, and Cys-78-Cys-89. Tyr-28, Gly-30, and Gly-32 together coordinate Ca(2+). Residue His-48 is part of the active site. Asp-49 provides a ligand contact to Ca(2+). Asp-92 is a catalytic residue.

Belongs to the phospholipase A2 family. Group I subfamily. D49 sub-subfamily. The cofactor is Ca(2+). Expressed by the venom gland.

Its subcellular location is the secreted. The catalysed reaction is a 1,2-diacyl-sn-glycero-3-phosphocholine + H2O = a 1-acyl-sn-glycero-3-phosphocholine + a fatty acid + H(+). In terms of biological role, PLA2 catalyzes the calcium-dependent hydrolysis of the 2-acyl groups in 3-sn-phosphoglycerides. The chain is Basic phospholipase A2 PA-9C from Pseudechis australis (Mulga snake).